The primary structure comprises 259 residues: Probable dihydroorotate dehydrogenase B (NAD(+)), electron transfer subunit (259 aa).

The FAD-binding FR-type domain maps to 1–89; sequence MLPLNVTITQ…RGPFGKGFTL (89 aa). [2Fe-2S] cluster-binding residues include C211, C216, C219, and C229.

The protein belongs to the PyrK family. In terms of assembly, heterotetramer of 2 PyrK and 2 PyrD type B subunits. Requires [2Fe-2S] cluster as cofactor. The cofactor is FAD.

It participates in pyrimidine metabolism; UMP biosynthesis via de novo pathway; orotate from (S)-dihydroorotate (NAD(+) route): step 1/1. Functionally, responsible for channeling the electrons from the oxidation of dihydroorotate from the FMN redox center in the PyrD type B subunit to the ultimate electron acceptor NAD(+). The polypeptide is Probable dihydroorotate dehydrogenase B (NAD(+)), electron transfer subunit (Methanosarcina acetivorans (strain ATCC 35395 / DSM 2834 / JCM 12185 / C2A)).